Consider the following 287-residue polypeptide: ATP synthase gamma chain (287 aa).

The protein belongs to the ATPase gamma chain family. As to quaternary structure, F-type ATPases have 2 components, CF(1) - the catalytic core - and CF(0) - the membrane proton channel. CF(1) has five subunits: alpha(3), beta(3), gamma(1), delta(1), epsilon(1). CF(0) has three main subunits: a, b and c.

The protein resides in the cell membrane. Produces ATP from ADP in the presence of a proton gradient across the membrane. The gamma chain is believed to be important in regulating ATPase activity and the flow of protons through the CF(0) complex. The sequence is that of ATP synthase gamma chain from Brevibacillus brevis (strain 47 / JCM 6285 / NBRC 100599).